A 340-amino-acid polypeptide reads, in one-letter code: Guanine nucleotide-binding protein G(I)/G(S)/G(T) subunit beta-2 (340 aa).

An N-acetylserine modification is found at S2. WD repeat units follow at residues 53–83 (GHLA…IIWD), 95–125 (LRSS…SIYS), 141–170 (GHTG…ALWD), 182–212 (GHSG…KLWD), 224–254 (GHES…RLFD), 268–298 (NIIC…NIWD), and 310–340 (GHDN…KIWN). Position 239 is a phosphotyrosine (Y239).

Belongs to the WD repeat G protein beta family. In terms of assembly, g proteins are composed of 3 units, alpha, beta and gamma. In this context, interacts with GNAI2 and GNG2. Interacts with ARHGEF18 and RASD2. Interacts with ATXN10. Interacts with SCN8A. In terms of tissue distribution, expressed in all cardiac subcompartments and in the brain, with highest levels in the atrioventricular node and brain.

Its subcellular location is the cytoplasm. It localises to the perinuclear region. It is found in the cell membrane. Guanine nucleotide-binding proteins (G proteins) are involved as a modulator or transducer in various transmembrane signaling systems. The beta and gamma chains are required for the GTPase activity, for replacement of GDP by GTP, and for G protein-effector interaction. This chain is Guanine nucleotide-binding protein G(I)/G(S)/G(T) subunit beta-2 (GNB2), found in Homo sapiens (Human).